We begin with the raw amino-acid sequence, 653 residues long: Endoglin (653 aa).

A signal peptide spans 1-24 (MDRGVLPQAIALLLAVCSFGPTAG). The Extracellular segment spans residues 25 to 581 (LAEGVQCDLQ…IVSPGLPDKG (557 aa)). The interval 27 to 44 (EGVQCDLQPVDPKVTYTT) is OR1, N-terminal part. A required for interaction with GDF2 region spans residues 27–336 (EGVQCDLQPV…RSCGSGLQPS (310 aa)). 7 disulfides stabilise this stretch: cysteine 31–cysteine 206, cysteine 51–cysteine 181, cysteine 241–cysteine 329, cysteine 349–cysteine 381, cysteine 362–cysteine 442, cysteine 393–cysteine 411, and cysteine 493–cysteine 549. Residues 45–198 (SQVSEGCVAH…MGHTLEWKSH (154 aa)) are OR2. N-linked (GlcNAc...) asparagine glycosylation is present at asparagine 57. Positions 199 to 329 (TQASVLGCHL…SVISLQDRSC (131 aa)) are OR1, C-terminal part. The interval 269–281 (KAWTTGEYSFKIF) is essential for interaction with GDF2. Asparagine 306 carries an N-linked (GlcNAc...) asparagine glycan. The ZP domain occupies 362–512 (CSDDVMTLVL…MVDLIQNQEA (151 aa)). A helical membrane pass occupies residues 582–606 (LVLPAVLGITFGAFLIGALLTAALW). Topologically, residues 607–653 (YIHSHTRHPGKREPVVAVAAPASSESSSTNHSIGSTQSTPCSTSSMA) are cytoplasmic. Residues 625 to 634 (AAPASSESSS) show a composition bias toward low complexity. The disordered stretch occupies residues 625–653 (AAPASSESSSTNHSIGSTQSTPCSTSSMA). Residues 635-653 (TNHSIGSTQSTPCSTSSMA) are compositionally biased toward polar residues. Residues serine 641 and serine 644 each carry the phosphoserine; by TGFBR1 modification.

As to quaternary structure, homodimer; disulfide-linked. Forms a heteromeric complex with the signaling receptors for transforming growth factor-beta: TGFBR1 and/or TGFBR2. It is able to bind TGFB1 and TGFB2 with high affinity, but not TGFB3. Interacts with GDF2, forming a heterotetramer with a 2:2 stoichiometry. Interacts with ACVRL1. Can form a heteromeric complex with GDF2 and ACVRL1. Interacts with BMP10. Interacts with DYNLT4. Interacts with ARRB2.

The protein resides in the cell membrane. Functionally, vascular endothelium glycoprotein that plays an important role in the regulation of angiogenesis. Required for normal structure and integrity of adult vasculature. Regulates the migration of vascular endothelial cells. Required for normal extraembryonic angiogenesis and for embryonic heart development. May regulate endothelial cell shape changes in response to blood flow, which drive vascular remodeling and establishment of normal vascular morphology during angiogenesis. May play a role in the binding of endothelial cells to integrins. Acts as a TGF-beta coreceptor and is involved in the TGF-beta/BMP signaling cascade that ultimately leads to the activation of SMAD transcription factors. Required for GDF2/BMP9 signaling through SMAD1 in endothelial cells and modulates TGFB1 signaling through SMAD3. This Sus scrofa (Pig) protein is Endoglin (ENG).